We begin with the raw amino-acid sequence, 337 residues long: Ketol-acid reductoisomerase (NADP(+)) (337 aa).

Residues Val3 to Thr183 form the KARI N-terminal Rossmann domain. NADP(+) is bound by residues Tyr26–Gln29, Lys49, Ser52, Ser54, and Asp84–Gln87. His109 is a catalytic residue. Residue Gly135 coordinates NADP(+). Residues Thr184–Val329 form the KARI C-terminal knotted domain. Mg(2+) is bound by residues Asp192, Glu196, Glu228, and Glu232. Ser253 contacts substrate.

Belongs to the ketol-acid reductoisomerase family. Mg(2+) serves as cofactor.

It carries out the reaction (2R)-2,3-dihydroxy-3-methylbutanoate + NADP(+) = (2S)-2-acetolactate + NADPH + H(+). It catalyses the reaction (2R,3R)-2,3-dihydroxy-3-methylpentanoate + NADP(+) = (S)-2-ethyl-2-hydroxy-3-oxobutanoate + NADPH + H(+). It participates in amino-acid biosynthesis; L-isoleucine biosynthesis; L-isoleucine from 2-oxobutanoate: step 2/4. The protein operates within amino-acid biosynthesis; L-valine biosynthesis; L-valine from pyruvate: step 2/4. Functionally, involved in the biosynthesis of branched-chain amino acids (BCAA). Catalyzes an alkyl-migration followed by a ketol-acid reduction of (S)-2-acetolactate (S2AL) to yield (R)-2,3-dihydroxy-isovalerate. In the isomerase reaction, S2AL is rearranged via a Mg-dependent methyl migration to produce 3-hydroxy-3-methyl-2-ketobutyrate (HMKB). In the reductase reaction, this 2-ketoacid undergoes a metal-dependent reduction by NADPH to yield (R)-2,3-dihydroxy-isovalerate. This chain is Ketol-acid reductoisomerase (NADP(+)), found in Mycolicibacterium smegmatis (strain ATCC 700084 / mc(2)155) (Mycobacterium smegmatis).